The chain runs to 359 residues: 3-dehydroquinate synthase (359 aa).

Residues Asp-72–Lys-77, Gly-106–Asp-110, Thr-130–Thr-131, Lys-143, Lys-152, and Cys-170–Thr-173 contribute to the NAD(+) site. The Zn(2+) site is built by Glu-185, His-248, and His-265.

The protein belongs to the sugar phosphate cyclases superfamily. Dehydroquinate synthase family. Co(2+) is required as a cofactor. Zn(2+) serves as cofactor. It depends on NAD(+) as a cofactor.

The protein localises to the cytoplasm. It carries out the reaction 7-phospho-2-dehydro-3-deoxy-D-arabino-heptonate = 3-dehydroquinate + phosphate. It functions in the pathway metabolic intermediate biosynthesis; chorismate biosynthesis; chorismate from D-erythrose 4-phosphate and phosphoenolpyruvate: step 2/7. Catalyzes the conversion of 3-deoxy-D-arabino-heptulosonate 7-phosphate (DAHP) to dehydroquinate (DHQ). In Photobacterium profundum (strain SS9), this protein is 3-dehydroquinate synthase.